Consider the following 381-residue polypeptide: Putative glycosyltransferase EpsD (381 aa).

The protein belongs to the glycosyltransferase group 1 family. Glycosyltransferase 4 subfamily.

Its function is as follows. May be involved in the production of the exopolysaccharide (EPS) component of the extracellular matrix during biofilm formation. EPS is responsible for the adhesion of chains of cells into bundles. Required for biofilm maintenance. The sequence is that of Putative glycosyltransferase EpsD (epsD) from Bacillus subtilis (strain 168).